The chain runs to 184 residues: Ribosome-recycling factor (184 aa).

This sequence belongs to the RRF family.

The protein localises to the cytoplasm. In terms of biological role, responsible for the release of ribosomes from messenger RNA at the termination of protein biosynthesis. May increase the efficiency of translation by recycling ribosomes from one round of translation to another. The polypeptide is Ribosome-recycling factor (Borrelia hermsii (strain HS1 / DAH)).